An 87-amino-acid chain; its full sequence is Small ribosomal subunit protein bS20 (87 aa).

The tract at residues 1 to 29 (MANTAQARKRARQAVKQNAHNSSQRSTLR) is disordered. The segment covering 20–29 (HNSSQRSTLR) has biased composition (polar residues).

This sequence belongs to the bacterial ribosomal protein bS20 family.

Functionally, binds directly to 16S ribosomal RNA. This Janthinobacterium sp. (strain Marseille) (Minibacterium massiliensis) protein is Small ribosomal subunit protein bS20.